A 222-amino-acid polypeptide reads, in one-letter code: Iron-sulfur cluster repair protein YtfE (222 aa).

The protein belongs to the RIC family. YtfE subfamily. As to quaternary structure, homodimer.

It localises to the cytoplasm. Di-iron-containing protein involved in the repair of iron-sulfur clusters damaged by oxidative and nitrosative stress conditions. In Musicola paradisiaca (strain Ech703) (Dickeya paradisiaca), this protein is Iron-sulfur cluster repair protein YtfE.